A 435-amino-acid polypeptide reads, in one-letter code: 3-ketoacyl-CoA thiolase (435 aa).

Residue Cys-98 is the Acyl-thioester intermediate of the active site. Active-site proton acceptor residues include His-391 and Cys-421.

It belongs to the thiolase-like superfamily. Thiolase family. In terms of assembly, heterotetramer of two alpha chains (FadJ) and two beta chains (FadI).

Its subcellular location is the cytoplasm. The enzyme catalyses an acyl-CoA + acetyl-CoA = a 3-oxoacyl-CoA + CoA. It functions in the pathway lipid metabolism; fatty acid beta-oxidation. Functionally, catalyzes the final step of fatty acid oxidation in which acetyl-CoA is released and the CoA ester of a fatty acid two carbons shorter is formed. The polypeptide is 3-ketoacyl-CoA thiolase (Vibrio vulnificus (strain YJ016)).